Here is a 626-residue protein sequence, read N- to C-terminus: Two-component response regulator ORR24 (626 aa).

Positions 1–22 are disordered; sequence MTVEERQGRVGGHGVSGGGGGR. A compositionally biased stretch (gly residues) spans 9–22; sequence RVGGHGVSGGGGGR. Residues 30–145 form the Response regulatory domain; that stretch reads RVLAVDDDPT…QLRTIWQHVI (116 aa). Asp81 bears the 4-aspartylphosphate mark. A compositionally biased stretch (basic and acidic residues) spans 151–162; sequence DAKNRGNDDDAG. Disordered regions lie at residues 151-215 and 400-440; these read DAKN…KKPR and LQPL…RTTN. The segment covering 191-202 has biased composition (acidic residues); sequence NGDDGDDSDENS. Positions 210–269 form a DNA-binding region, myb-like GARP; the sequence is TQKKPRVVWSVELHRKFVAAVNQLGIEKAVPKKILDLMNVENITRENVASHLQKYRLYLK. Over residues 400 to 421 the composition is skewed to polar residues; sequence LQPLESSSQQHLSRVHSSSADP.

Belongs to the ARR family. Type-B subfamily. In terms of processing, two-component system major event consists of a His-to-Asp phosphorelay between a sensor histidine kinase (HK) and a response regulator (RR). In plants, the His-to-Asp phosphorelay involves an additional intermediate named Histidine-containing phosphotransfer protein (HPt). This multistep phosphorelay consists of a His-Asp-His-Asp sequential transfer of a phosphate group between first a His and an Asp of the HK protein, followed by the transfer to a conserved His of the HPt protein and finally the transfer to an Asp in the receiver domain of the RR protein.

It localises to the nucleus. Functionally, transcriptional activator that binds specific DNA sequence. Functions as a response regulator involved in His-to-Asp phosphorelay signal transduction system. Phosphorylation of the Asp residue in the receiver domain activates the ability of the protein to promote the transcription of target genes. May directly activate some type-A response regulators in response to cytokinins. In Oryza sativa subsp. indica (Rice), this protein is Two-component response regulator ORR24.